Here is a 567-residue protein sequence, read N- to C-terminus: UPF0313 protein CTN_0332 (567 aa).

In terms of domain architecture, Radical SAM core spans 288–560; that stretch reads KAIETVKFSI…NKMKENVLFK (273 aa). [4Fe-4S] cluster-binding residues include Cys303, Cys307, and Cys310.

Belongs to the UPF0313 family. [4Fe-4S] cluster is required as a cofactor.

This is UPF0313 protein CTN_0332 from Thermotoga neapolitana (strain ATCC 49049 / DSM 4359 / NBRC 107923 / NS-E).